A 346-amino-acid polypeptide reads, in one-letter code: [LysW]-lysine/[LysW]-ornithine hydrolase (346 aa).

His-68 contributes to the Zn(2+) binding site. Residue Asp-70 is part of the active site. Asp-92 contacts Zn(2+). Glu-122 serves as the catalytic Proton acceptor. 3 residues coordinate Zn(2+): Glu-123, Glu-146, and His-317.

The protein belongs to the peptidase M20A family. LysK subfamily. It depends on Zn(2+) as a cofactor. Co(2+) serves as cofactor.

The protein resides in the cytoplasm. The enzyme catalyses [amino-group carrier protein]-C-terminal-gamma-(L-lysyl)-L-glutamate + H2O = [amino-group carrier protein]-C-terminal-L-glutamate + L-lysine. It catalyses the reaction [amino-group carrier protein]-C-terminal-gamma-(L-ornithyl)-L-glutamate + H2O = [amino-group carrier protein]-C-terminal-L-glutamate + L-ornithine. Its pathway is amino-acid biosynthesis; L-lysine biosynthesis via AAA pathway; L-lysine from L-alpha-aminoadipate (Thermus route): step 5/5. It participates in amino-acid biosynthesis; L-arginine biosynthesis. Catalyzes the release of L-lysine from [LysW]-gamma-L-lysine and the release of L-ornithine from [LysW]-L-ornithine. The chain is [LysW]-lysine/[LysW]-ornithine hydrolase from Saccharolobus islandicus (strain Y.G.57.14 / Yellowstone #1) (Sulfolobus islandicus).